The following is a 256-amino-acid chain: MDPTYSSESIYNLIPSDWKEPPQPPRYISIFKATVKDDMQKFKTAMKTMGPAKLEVPSPKDFLKKHSKEKTLPPKKKFDRHEPKKPPVPLRTEHPVMGIQSEKNFINTNAANVIMGVAKKPKPVYVDKRTGDKHDLETSGLVPKYINKKDYGVTPEYICKRNEEVKKAQEEYDNYIQENLRKAAMKRLSDEEREAVLQGLKKNWEEVHKEFQSLSVFIDSIPKKMRKQKLEEEMKQLEHDIAVLEKHKIIYIANKK.

The disordered stretch occupies residues 48-92 (TMGPAKLEVPSPKDFLKKHSKEKTLPPKKKFDRHEPKKPPVPLRT). A compositionally biased stretch (basic and acidic residues) spans 61 to 72 (DFLKKHSKEKTL). An SH3-binding motif is present at residues 83–89 (PKKPPVP). Residues 160-252 (KRNEEVKKAQ…VLEKHKIIYI (93 aa)) form the Enkurin domain. Positions 176–187 (IQENLRKAAMKR) constitute an IQ domain.

Microtubule inner protein component of sperm flagellar doublet microtubules. Binds calmodulin via its IQ domain. Interacts with TRPC1, TRPC2, TRPC5, but not TRPC3. Interacts with CFAP45.

It localises to the cytoplasm. The protein localises to the cytoskeleton. The protein resides in the cilium axoneme. It is found in the flagellum axoneme. In terms of biological role, adapter that functions to localize a calcium-sensitive signal transduction machinery in sperm to a calcium-permeable ion channel. Microtubule inner protein (MIP) part of the dynein-decorated doublet microtubules (DMTs) in cilia axoneme, which is required for motile cilia beating. This chain is Enkurin (ENKUR), found in Sus scrofa (Pig).